The sequence spans 549 residues: Zinc finger protein 382 (549 aa).

The segment at 1 to 105 is mediates interaction with TRIM28; that stretch reads MNCHSVPLQG…DKPPTSIVII (105 aa). Represses transcription stretches follow at residues 10–51 and 75–210; these read GPVS…FISV and MFPS…PEQR. Positions 12–83 constitute a KRAB domain; sequence VSFKDVTVDF…RMFPSQSYLE (72 aa). 10 consecutive C2H2-type zinc fingers follow at residues 211 to 233, 295 to 317, 323 to 345, 351 to 373, 379 to 401, 407 to 429, 435 to 457, 463 to 485, 491 to 513, and 519 to 541; these read FECD…DRAH, FQCP…QRIH, YICS…EKTH, YLCV…HKTH, YECT…QRTH, YQCA…QRTH, YMCS…QRIH, YVCS…YRIH, NGCP…QKTH, and YECH…QKTH. Positions 295-549 are required for transcriptional repression activity; probably mediates sequence-specific DNA-binding; that stretch reads FQCPYCGNSF…THKAETVRFQ (255 aa).

It belongs to the krueppel C2H2-type zinc-finger protein family. Interacts with TRIM28; enhances the transcriptional repressor activity. Ubiquitously expressed with higher expression in lung, kidney and testis.

The protein resides in the nucleus. Its function is as follows. Functions as a sequence-specific transcriptional repressor. This chain is Zinc finger protein 382 (Znf382), found in Rattus norvegicus (Rat).